A 132-amino-acid chain; its full sequence is Small ribosomal subunit protein uS8c (132 aa).

It belongs to the universal ribosomal protein uS8 family. As to quaternary structure, part of the 30S ribosomal subunit.

It is found in the plastid. The protein localises to the chloroplast. In terms of biological role, one of the primary rRNA binding proteins, it binds directly to 16S rRNA central domain where it helps coordinate assembly of the platform of the 30S subunit. In Ceratophyllum demersum (Rigid hornwort), this protein is Small ribosomal subunit protein uS8c (rps8).